Reading from the N-terminus, the 184-residue chain is uncharacterized protein (184 aa).

A signal peptide spans 1–23 (MFCLLHLCFYLANFASSIKRTHA).

Its subcellular location is the secreted. This is an uncharacterized protein from Homo sapiens (Human).